Consider the following 114-residue polypeptide: Non-specific lipid-transfer protein 2 (114 aa).

Residues 1–23 (MEMVNKIACFVLLCMVVVAPHAE) form the signal peptide. 4 cysteine pairs are disulfide-bonded: Cys-27-Cys-73, Cys-37-Cys-50, Cys-51-Cys-96, and Cys-71-Cys-110.

This sequence belongs to the plant LTP family.

Its function is as follows. Plant non-specific lipid-transfer proteins transfer phospholipids as well as galactolipids across membranes. May play a role in wax or cutin deposition in the cell walls of expanding epidermal cells and certain secretory tissues. This Solanum chilense (Tomato) protein is Non-specific lipid-transfer protein 2.